The chain runs to 344 residues: N-acetyl-gamma-glutamyl-phosphate reductase (344 aa).

Residue C148 is part of the active site.

Belongs to the NAGSA dehydrogenase family. Type 1 subfamily.

It is found in the cytoplasm. It carries out the reaction N-acetyl-L-glutamate 5-semialdehyde + phosphate + NADP(+) = N-acetyl-L-glutamyl 5-phosphate + NADPH + H(+). It functions in the pathway amino-acid biosynthesis; L-arginine biosynthesis; N(2)-acetyl-L-ornithine from L-glutamate: step 3/4. Catalyzes the NADPH-dependent reduction of N-acetyl-5-glutamyl phosphate to yield N-acetyl-L-glutamate 5-semialdehyde. The chain is N-acetyl-gamma-glutamyl-phosphate reductase from Clostridium beijerinckii (strain ATCC 51743 / NCIMB 8052) (Clostridium acetobutylicum).